The primary structure comprises 489 residues: N-succinylglutamate 5-semialdehyde dehydrogenase 1 (489 aa).

223-228 (GSSRTG) lines the NAD(+) pocket. Active-site residues include E246 and C280.

This sequence belongs to the aldehyde dehydrogenase family. AstD subfamily.

It catalyses the reaction N-succinyl-L-glutamate 5-semialdehyde + NAD(+) + H2O = N-succinyl-L-glutamate + NADH + 2 H(+). It participates in amino-acid degradation; L-arginine degradation via AST pathway; L-glutamate and succinate from L-arginine: step 4/5. Catalyzes the NAD-dependent reduction of succinylglutamate semialdehyde into succinylglutamate. The protein is N-succinylglutamate 5-semialdehyde dehydrogenase 1 of Pseudoalteromonas translucida (strain TAC 125).